Reading from the N-terminus, the 51-residue chain is Large ribosomal subunit protein bL33 (51 aa).

The tract at residues 1–20 (MRDKIRLNSSAGTGHFYTTD) is disordered.

It belongs to the bacterial ribosomal protein bL33 family.

This chain is Large ribosomal subunit protein bL33, found in Psychromonas ingrahamii (strain DSM 17664 / CCUG 51855 / 37).